The primary structure comprises 260 residues: Triosephosphate isomerase (260 aa).

11–13 is a binding site for substrate; it reads NWK. His103 serves as the catalytic Electrophile. Residue Glu175 is the Proton acceptor of the active site. Substrate is bound by residues Gly181, Ser220, and 241–242; that span reads GG.

This sequence belongs to the triosephosphate isomerase family. In terms of assembly, homodimer.

It localises to the cytoplasm. It carries out the reaction D-glyceraldehyde 3-phosphate = dihydroxyacetone phosphate. Its pathway is carbohydrate biosynthesis; gluconeogenesis. The protein operates within carbohydrate degradation; glycolysis; D-glyceraldehyde 3-phosphate from glycerone phosphate: step 1/1. In terms of biological role, involved in the gluconeogenesis. Catalyzes stereospecifically the conversion of dihydroxyacetone phosphate (DHAP) to D-glyceraldehyde-3-phosphate (G3P). This chain is Triosephosphate isomerase, found in Shewanella pealeana (strain ATCC 700345 / ANG-SQ1).